The primary structure comprises 213 residues: Pyridoxine/pyridoxamine 5'-phosphate oxidase (213 aa).

FMN is bound by residues 60–65, 75–76, Lys-82, and Gln-104; these read RMVLMK and YS. Residue Lys-65 coordinates substrate. 3 residues coordinate substrate: Tyr-122, Arg-126, and Ser-130. Residues 139 to 140 and Trp-184 each bind FMN; that span reads QS. 190-192 provides a ligand contact to substrate; that stretch reads RLH. Arg-194 contacts FMN.

Belongs to the pyridoxamine 5'-phosphate oxidase family. As to quaternary structure, homodimer. It depends on FMN as a cofactor.

It catalyses the reaction pyridoxamine 5'-phosphate + O2 + H2O = pyridoxal 5'-phosphate + H2O2 + NH4(+). The enzyme catalyses pyridoxine 5'-phosphate + O2 = pyridoxal 5'-phosphate + H2O2. Its pathway is cofactor metabolism; pyridoxal 5'-phosphate salvage; pyridoxal 5'-phosphate from pyridoxamine 5'-phosphate: step 1/1. The protein operates within cofactor metabolism; pyridoxal 5'-phosphate salvage; pyridoxal 5'-phosphate from pyridoxine 5'-phosphate: step 1/1. Functionally, catalyzes the oxidation of either pyridoxine 5'-phosphate (PNP) or pyridoxamine 5'-phosphate (PMP) into pyridoxal 5'-phosphate (PLP). The sequence is that of Pyridoxine/pyridoxamine 5'-phosphate oxidase from Rhodopseudomonas palustris (strain BisB18).